The following is a 197-amino-acid chain: Holliday junction branch migration complex subunit RuvA (197 aa).

The segment at 1 to 63 (MFEYLNGKLV…EDAHSLYGFV (63 aa)) is domain I. Residues 64 to 142 (NEAEKALFLR…ATGTVGISLL (79 aa)) are domain II. The segment at 142–146 (LDAGP) is flexible linker. The tract at residues 147–197 (AGNLALEEAIEALQALGYKATELKKIEKKLAQETGLTSEEYIKSALKLMMK) is domain III.

It belongs to the RuvA family. In terms of assembly, homotetramer. Forms an RuvA(8)-RuvB(12)-Holliday junction (HJ) complex. HJ DNA is sandwiched between 2 RuvA tetramers; dsDNA enters through RuvA and exits via RuvB. An RuvB hexamer assembles on each DNA strand where it exits the tetramer. Each RuvB hexamer is contacted by two RuvA subunits (via domain III) on 2 adjacent RuvB subunits; this complex drives branch migration. In the full resolvosome a probable DNA-RuvA(4)-RuvB(12)-RuvC(2) complex forms which resolves the HJ.

Its subcellular location is the cytoplasm. The RuvA-RuvB-RuvC complex processes Holliday junction (HJ) DNA during genetic recombination and DNA repair, while the RuvA-RuvB complex plays an important role in the rescue of blocked DNA replication forks via replication fork reversal (RFR). RuvA specifically binds to HJ cruciform DNA, conferring on it an open structure. The RuvB hexamer acts as an ATP-dependent pump, pulling dsDNA into and through the RuvAB complex. HJ branch migration allows RuvC to scan DNA until it finds its consensus sequence, where it cleaves and resolves the cruciform DNA. This Lactococcus lactis subsp. lactis (strain IL1403) (Streptococcus lactis) protein is Holliday junction branch migration complex subunit RuvA.